Here is a 159-residue protein sequence, read N- to C-terminus: Crossover junction endodeoxyribonuclease RuvC (159 aa).

Catalysis depends on residues Asp7, Glu67, and Asp139. Residues Asp7, Glu67, and Asp139 each contribute to the Mg(2+) site.

The protein belongs to the RuvC family. In terms of assembly, homodimer which binds Holliday junction (HJ) DNA. The HJ becomes 2-fold symmetrical on binding to RuvC with unstacked arms; it has a different conformation from HJ DNA in complex with RuvA. In the full resolvosome a probable DNA-RuvA(4)-RuvB(12)-RuvC(2) complex forms which resolves the HJ. The cofactor is Mg(2+).

The protein resides in the cytoplasm. It carries out the reaction Endonucleolytic cleavage at a junction such as a reciprocal single-stranded crossover between two homologous DNA duplexes (Holliday junction).. In terms of biological role, the RuvA-RuvB-RuvC complex processes Holliday junction (HJ) DNA during genetic recombination and DNA repair. Endonuclease that resolves HJ intermediates. Cleaves cruciform DNA by making single-stranded nicks across the HJ at symmetrical positions within the homologous arms, yielding a 5'-phosphate and a 3'-hydroxyl group; requires a central core of homology in the junction. The consensus cleavage sequence is 5'-(A/T)TT(C/G)-3'. Cleavage occurs on the 3'-side of the TT dinucleotide at the point of strand exchange. HJ branch migration catalyzed by RuvA-RuvB allows RuvC to scan DNA until it finds its consensus sequence, where it cleaves and resolves the cruciform DNA. The protein is Crossover junction endodeoxyribonuclease RuvC of Orientia tsutsugamushi (strain Boryong) (Rickettsia tsutsugamushi).